Reading from the N-terminus, the 331-residue chain is DNA-directed RNA polymerase subunit alpha (331 aa).

The tract at residues 1-226 (MLIAQRPTLT…ELFGLARELN (226 aa)) is alpha N-terminal domain (alpha-NTD). The segment at 243–331 (LSSELSMPIE…SYDEDETTTN (89 aa)) is alpha C-terminal domain (alpha-CTD).

The protein belongs to the RNA polymerase alpha chain family. In terms of assembly, homodimer. The RNAP catalytic core consists of 2 alpha, 1 beta, 1 beta' and 1 omega subunit. When a sigma factor is associated with the core the holoenzyme is formed, which can initiate transcription.

The catalysed reaction is RNA(n) + a ribonucleoside 5'-triphosphate = RNA(n+1) + diphosphate. DNA-dependent RNA polymerase catalyzes the transcription of DNA into RNA using the four ribonucleoside triphosphates as substrates. This chain is DNA-directed RNA polymerase subunit alpha, found in Clavibacter michiganensis subsp. michiganensis (strain NCPPB 382).